The following is a 717-amino-acid chain: ATP-dependent zinc metalloprotease FtsH (717 aa).

Over 1–7 (MFKDKKM) the chain is Cytoplasmic. Residues 8-28 (LKYIVIYSIIAFGILLTFNMV) traverse the membrane as a helical segment. Over 29-109 (KDEMLYEKVD…VEFNVTKPEN (81 aa)) the chain is Extracellular. The chain crosses the membrane as a helical span at residues 110 to 130 (YQLLGLLMSWVFPLILIFFVG). At 131-717 (RMMFSKMNNK…SSTNNKVDGE (587 aa)) the chain is on the cytoplasmic side. Position 206 to 213 (206 to 213 (GPPGTGKT)) interacts with ATP. H427 lines the Zn(2+) pocket. Residue E428 is part of the active site. Residues H431 and D504 each coordinate Zn(2+). The disordered stretch occupies residues 670-717 (KLARANNEANNDALDSSKENEEVKSNVNDGATEEKKDDSSTNNKVDGE). 2 stretches are compositionally biased toward basic and acidic residues: residues 684-693 (DSSKENEEVK) and 701-717 (TEEKKDDSSTNNKVDGE).

It in the central section; belongs to the AAA ATPase family. This sequence in the C-terminal section; belongs to the peptidase M41 family. Homohexamer. Zn(2+) serves as cofactor.

It is found in the cell membrane. Acts as a processive, ATP-dependent zinc metallopeptidase for both cytoplasmic and membrane proteins. Plays a role in the quality control of integral membrane proteins. The protein is ATP-dependent zinc metalloprotease FtsH of Clostridium perfringens (strain ATCC 13124 / DSM 756 / JCM 1290 / NCIMB 6125 / NCTC 8237 / Type A).